The primary structure comprises 340 residues: Quinic acid degradation cluster protein x (340 aa).

Mg(2+) is bound by residues E90, D115, L117, D118, and D262. A substrate-binding site is contributed by E90. Residues 117–120 (LDGT) and D262 each bind substrate.

The protein belongs to the inositol monophosphatase superfamily.

Its function is as follows. Part of the qa gene cluster that mediates the catabolism of quinic acid (QA) and as such, allows the use of QA as a sole carbon source. Its function within the pathway has not been determined yet but it probably plays a regulatory role. The qa cluster encodes 3 inducible enymes (qa-2, qa-3 and qa-4) catalyzing the first three reactions in the catabolism of quinic acid to protocatechuic acid (also known as 3,4-Dihydroxybenzoic acid). The polypeptide is Quinic acid degradation cluster protein x (Neurospora crassa (strain ATCC 24698 / 74-OR23-1A / CBS 708.71 / DSM 1257 / FGSC 987)).